The chain runs to 592 residues: Arginine--tRNA ligase (592 aa).

The 'HIGH' region signature appears at Ala139–His149.

Belongs to the class-I aminoacyl-tRNA synthetase family.

Its subcellular location is the cytoplasm. The catalysed reaction is tRNA(Arg) + L-arginine + ATP = L-arginyl-tRNA(Arg) + AMP + diphosphate. This Methanopyrus kandleri (strain AV19 / DSM 6324 / JCM 9639 / NBRC 100938) protein is Arginine--tRNA ligase.